A 127-amino-acid chain; its full sequence is MNFSKSLLLIAFGGAIGSIFRYLLQYWFGNVLGYSLPWGTLTANLLGSFLIGVVYAISDRFPLFDPQWKFLLASGFCGGFTTFSTFSYETFQMLKSGHYILFLGYICLSVVGGIGFAFAGVWMIKNF.

4 consecutive transmembrane segments (helical) span residues 8–28, 37–57, 68–88, and 100–120; these read LLIA…QYWF, PWGT…VYAI, WKFL…TFSY, and ILFL…AFAG. Glycine 78 and threonine 81 together coordinate Na(+).

This sequence belongs to the fluoride channel Fluc/FEX (TC 1.A.43) family.

It is found in the cell inner membrane. The enzyme catalyses fluoride(in) = fluoride(out). Na(+) is not transported, but it plays an essential structural role and its presence is essential for fluoride channel function. Functionally, fluoride-specific ion channel. Important for reducing fluoride concentration in the cell, thus reducing its toxicity. The chain is Fluoride-specific ion channel FluC from Leptospira interrogans serogroup Icterohaemorrhagiae serovar copenhageni (strain Fiocruz L1-130).